We begin with the raw amino-acid sequence, 305 residues long: MVTATHSQSSVGRLRHLARQYAALTKPRVTQLAVFCAIIGMFLATPGMVPWSVLIGGAAGIWLLAGAAFAINCLVEQKIDALMRRTAWRPSATGEITTTQTLIFSAVLGGAGMWLLHVFANDLTMWLTFATFLGYAVVYTILLKPATPQNIVIGGLSGAMPPALGWSAVSGTVPAEAWFLVLIIFTWTPPHFWALALYRRADYAKSGLPMLPITHGERYTLLHILLYTLIMIAATLLPFVYGMSGYIYLVAALGLGLVFLGYAWKLYRNYSDGLAQRTFRYSILYLSLLFAVLLVDHYFKFVPQV.

The next 9 helical transmembrane spans lie at 29–49 (VTQL…PGMV), 51–71 (WSVL…AFAI), 101–121 (TLIF…VFAN), 123–143 (LTMW…TILL), 151–171 (IVIG…AVSG), 177–197 (AWFL…ALAL), 221–241 (LLHI…PFVY), 244–264 (SGYI…GYAW), and 283–303 (ILYL…KFVP).

This sequence belongs to the UbiA prenyltransferase family. Protoheme IX farnesyltransferase subfamily.

It localises to the cell inner membrane. The catalysed reaction is heme b + (2E,6E)-farnesyl diphosphate + H2O = Fe(II)-heme o + diphosphate. Its pathway is porphyrin-containing compound metabolism; heme O biosynthesis; heme O from protoheme: step 1/1. Converts heme B (protoheme IX) to heme O by substitution of the vinyl group on carbon 2 of heme B porphyrin ring with a hydroxyethyl farnesyl side group. In Cupriavidus metallidurans (strain ATCC 43123 / DSM 2839 / NBRC 102507 / CH34) (Ralstonia metallidurans), this protein is Protoheme IX farnesyltransferase.